Consider the following 61-residue polypeptide: MAKKSLKVKQTRIPKFAVRAYTRCQRCGRARAVLSHFGVCRLCFRELAYAGAIPGVKKASW.

Zn(2+) is bound by residues Cys-24, Cys-27, Cys-40, and Cys-43.

This sequence belongs to the universal ribosomal protein uS14 family. Zinc-binding uS14 subfamily. Part of the 30S ribosomal subunit. Contacts proteins S3 and S10. Zn(2+) is required as a cofactor.

In terms of biological role, binds 16S rRNA, required for the assembly of 30S particles and may also be responsible for determining the conformation of the 16S rRNA at the A site. The protein is Small ribosomal subunit protein uS14 of Mycoplasma pneumoniae (strain ATCC 29342 / M129 / Subtype 1) (Mycoplasmoides pneumoniae).